The chain runs to 148 residues: 3-dehydroquinate dehydratase (148 aa).

Catalysis depends on Tyr-23, which acts as the Proton acceptor. Residues Asn-75, His-81, and Asp-88 each coordinate substrate. Residue His-101 is the Proton donor of the active site. Substrate-binding positions include Leu-102–Ser-103 and Arg-112.

The protein belongs to the type-II 3-dehydroquinase family. Homododecamer.

It carries out the reaction 3-dehydroquinate = 3-dehydroshikimate + H2O. The protein operates within metabolic intermediate biosynthesis; chorismate biosynthesis; chorismate from D-erythrose 4-phosphate and phosphoenolpyruvate: step 3/7. Its function is as follows. Catalyzes a trans-dehydration via an enolate intermediate. The chain is 3-dehydroquinate dehydratase from Cellvibrio japonicus (strain Ueda107) (Pseudomonas fluorescens subsp. cellulosa).